The sequence spans 470 residues: Trigger factor (470 aa).

One can recognise a PPIase FKBP-type domain in the interval 164–243; that stretch reads GDYVVIDMTA…VTAVKVQELP (80 aa). Acidic residues-rich tracts occupy residues 424 to 438 and 445 to 470; these read ETDA…ESVE and AEDD…AAKA. The disordered stretch occupies residues 424–470; sequence ETDAEDAAEGVESVEVDLSAAAEDDAEETSDEPAAEDTATEDEAAKA.

It belongs to the FKBP-type PPIase family. Tig subfamily.

The protein resides in the cytoplasm. The catalysed reaction is [protein]-peptidylproline (omega=180) = [protein]-peptidylproline (omega=0). In terms of biological role, involved in protein export. Acts as a chaperone by maintaining the newly synthesized protein in an open conformation. Functions as a peptidyl-prolyl cis-trans isomerase. This chain is Trigger factor, found in Beutenbergia cavernae (strain ATCC BAA-8 / DSM 12333 / CCUG 43141 / JCM 11478 / NBRC 16432 / NCIMB 13614 / HKI 0122).